We begin with the raw amino-acid sequence, 454 residues long: MDHQVSLPQSTTTGLSFKVHRQQRELVTPAKPTPRELKPLSDIDDQQGLRFQIPVIFFYRPNLSSDLDPVQVIKKALADALVYYYPFAGRLRELSNRKLAVDCTGEGVLFIEAEADVALAELEEADALLPPFPFLEELLFDVEGSSDVLNTPLLLVQVTRLKCCGFIFALRFNHTMTDGAGLSLFLKSLCELACGLHAPSVPPVWNRHLLTVSASEARVTHTHREYDDQVGIDVVATGHPLVSRSFFFRAEEISAIRKLLPPDLHNTSFEALSSFLWRCRTIALNPDPNTEMRLTCIINSRSKLRNPPLEPGYYGNVFVIPAAIATARDLIEKPLEFALRLIQETKSSVTEDYVRSVTALMATRGRPMFVASGNYIISDLRHFDLGKIDFGPWGKPVYGGTAKAGIALFPGVSFYVPFKNKKGETGTVVAISLPVRAMETFVAELNGVLNVSKG.

Residues H174 and D389 each act as proton acceptor in the active site.

This sequence belongs to the plant acyltransferase family. Expressed in leaves and stems. Lower levels in flowers and barely detected in roots and siliques.

The enzyme catalyses (3Z)-hex-3-en-1-ol + acetyl-CoA = (3Z)-hex-3-en-1-yl acetate + CoA. Its activity is regulated as follows. Inhibited by magnesium, calcium, cobalt, zinc and copper. Its function is as follows. Acyltransferase involved in the production of green leaf volatiles (GLVs). Uses acetyl-CoA as substrate, but not malonyl-CoA or benzoyl-CoA. Prefers primary, medium-chain-length, aliphatic alcohols. The protein is (Z)-3-hexen-1-ol acetyltransferase (CHAT) of Arabidopsis thaliana (Mouse-ear cress).